Reading from the N-terminus, the 377-residue chain is tRNA/tmRNA (uracil-C(5))-methyltransferase (377 aa).

S-adenosyl-L-methionine-binding residues include Gln-199, Tyr-227, Asn-232, Glu-248, and Asp-308. Cys-333 serves as the catalytic Nucleophile. Glu-367 acts as the Proton acceptor in catalysis.

The protein belongs to the class I-like SAM-binding methyltransferase superfamily. RNA M5U methyltransferase family. TrmA subfamily.

The enzyme catalyses uridine(54) in tRNA + S-adenosyl-L-methionine = 5-methyluridine(54) in tRNA + S-adenosyl-L-homocysteine + H(+). The catalysed reaction is uridine(341) in tmRNA + S-adenosyl-L-methionine = 5-methyluridine(341) in tmRNA + S-adenosyl-L-homocysteine + H(+). Dual-specificity methyltransferase that catalyzes the formation of 5-methyluridine at position 54 (m5U54) in all tRNAs, and that of position 341 (m5U341) in tmRNA (transfer-mRNA). This is tRNA/tmRNA (uracil-C(5))-methyltransferase from Aeromonas hydrophila subsp. hydrophila (strain ATCC 7966 / DSM 30187 / BCRC 13018 / CCUG 14551 / JCM 1027 / KCTC 2358 / NCIMB 9240 / NCTC 8049).